A 168-amino-acid polypeptide reads, in one-letter code: Protein B-Myc (168 aa).

Disordered regions lie at residues 26–94 (DDEE…DLPE) and 146–168 (EGAS…TCNT). Phosphoserine is present on residues Ser59 and Ser67.

Its subcellular location is the nucleus. In terms of biological role, seems to act as an inhibitor of cellular proliferation. In Rattus norvegicus (Rat), this protein is Protein B-Myc (Mycb).